A 352-amino-acid chain; its full sequence is Photosystem II D2 protein 2 (352 aa).

A helical membrane pass occupies residues 40-60; the sequence is CAYLALGGWLTGTSFVTSWYT. A chlorophyll a-binding site is contributed by H117. The chain crosses the membrane as a helical span at residues 124–140; sequence GFMLRQFEIARLVGVRP. 2 residues coordinate pheophytin a: Q129 and N142. The helical transmembrane segment at 152-165 threads the bilayer; that stretch reads VFVSVFLMYPLGQS. H197 is a binding site for chlorophyll a. A helical membrane pass occupies residues 207–227; sequence GALLCAIHGATVENTLFEDSE. 2 residues coordinate a plastoquinone: H214 and F261. A Fe cation-binding site is contributed by H214. H268 contacts Fe cation. A helical transmembrane segment spans residues 278 to 294; sequence GLWMSSIGIVGLALNLR.

It belongs to the reaction center PufL/M/PsbA/D family. In terms of assembly, PSII is composed of 1 copy each of membrane proteins PsbA, PsbB, PsbC, PsbD, PsbE, PsbF, PsbH, PsbI, PsbJ, PsbK, PsbL, PsbM, PsbT, PsbX, PsbY, PsbZ, Psb30/Ycf12, peripheral proteins PsbO, CyanoQ (PsbQ), PsbU, PsbV and a large number of cofactors. It forms dimeric complexes. It depends on The D1/D2 heterodimer binds P680, chlorophylls that are the primary electron donor of PSII, and subsequent electron acceptors. It shares a non-heme iron and each subunit binds pheophytin, quinone, additional chlorophylls, carotenoids and lipids. There is also a Cl(-1) ion associated with D1 and D2, which is required for oxygen evolution. The PSII complex binds additional chlorophylls, carotenoids and specific lipids. as a cofactor.

Its subcellular location is the cellular thylakoid membrane. The enzyme catalyses 2 a plastoquinone + 4 hnu + 2 H2O = 2 a plastoquinol + O2. Its function is as follows. Photosystem II (PSII) is a light-driven water:plastoquinone oxidoreductase that uses light energy to abstract electrons from H(2)O, generating O(2) and a proton gradient subsequently used for ATP formation. It consists of a core antenna complex that captures photons, and an electron transfer chain that converts photonic excitation into a charge separation. The D1/D2 (PsbA/PsbD) reaction center heterodimer binds P680, the primary electron donor of PSII as well as several subsequent electron acceptors. D2 is needed for assembly of a stable PSII complex. The protein is Photosystem II D2 protein 2 of Synechococcus sp. (strain ATCC 27144 / PCC 6301 / SAUG 1402/1) (Anacystis nidulans).